Consider the following 268-residue polypeptide: LOB domain-containing protein 13 (268 aa).

In terms of domain architecture, LOB spans threonine 51–isoleucine 152. The tract at residues leucine 191–aspartate 268 is disordered. Pro residues-rich tracts occupy residues leucine 192–proline 205 and proline 212–leucine 222. Low complexity predominate over residues proline 223–methionine 243. Residues serine 250–aspartate 268 show a composition bias toward polar residues.

This sequence belongs to the LOB domain-containing protein family. Expressed in shoots and roots and at low levels in flowers, but not in leaves or inflorescence stems.

This Arabidopsis thaliana (Mouse-ear cress) protein is LOB domain-containing protein 13 (LBD13).